Consider the following 377-residue polypeptide: NADH dehydrogenase [ubiquinone] 1 alpha subcomplex subunit 9, mitochondrial (377 aa).

Residues 1–35 (MAAAAQSRVVRVLSMSRSAITAIATSVCHGPPCRQ) constitute a mitochondrion transit peptide. Residue K175 is modified to N6-succinyllysine. K189 and K370 each carry N6-acetyllysine.

It belongs to the complex I NDUFA9 subunit family. In terms of assembly, complex I is composed of 45 different subunits. This a component of the hydrophobic protein fraction. Interacts with BLOC1S1. Interacts with SLC2A4. Interacts with CLOCK. Interacts with RAB5IF. FAD serves as cofactor. Acetylated on lysine residues. BLOC1S1 is required for acetylation. Acetylated by CLOCK in a circadian manner.

The protein localises to the mitochondrion matrix. Its function is as follows. Accessory subunit of the mitochondrial membrane respiratory chain NADH dehydrogenase (Complex I), that is believed not to be involved in catalysis. Required for proper complex I assembly. Complex I functions in the transfer of electrons from NADH to the respiratory chain. The immediate electron acceptor for the enzyme is believed to be ubiquinone. This chain is NADH dehydrogenase [ubiquinone] 1 alpha subcomplex subunit 9, mitochondrial (NDUFA9), found in Homo sapiens (Human).